A 667-amino-acid chain; its full sequence is DNA ligase (667 aa).

Residues aspartate 32–aspartate 36 and serine 80–leucine 81 each bind NAD(+). Catalysis depends on lysine 121, which acts as the N6-AMP-lysine intermediate. NAD(+) contacts are provided by arginine 143, glutamate 178, and lysine 314. Zn(2+) contacts are provided by cysteine 407, cysteine 410, cysteine 423, and cysteine 429. One can recognise a BRCT domain in the interval isoleucine 587–serine 667.

It belongs to the NAD-dependent DNA ligase family. LigA subfamily. Mg(2+) serves as cofactor. Requires Mn(2+) as cofactor.

The catalysed reaction is NAD(+) + (deoxyribonucleotide)n-3'-hydroxyl + 5'-phospho-(deoxyribonucleotide)m = (deoxyribonucleotide)n+m + AMP + beta-nicotinamide D-nucleotide.. Its function is as follows. DNA ligase that catalyzes the formation of phosphodiester linkages between 5'-phosphoryl and 3'-hydroxyl groups in double-stranded DNA using NAD as a coenzyme and as the energy source for the reaction. It is essential for DNA replication and repair of damaged DNA. This chain is DNA ligase, found in Clostridium botulinum (strain Alaska E43 / Type E3).